The chain runs to 1190 residues: Phosphatidylinositol 3,4,5-trisphosphate 5-phosphatase 1 (1190 aa).

An SH2 domain is found at 8–104 (WNHGNITRSK…GLVTHLQFPV (97 aa)). Over residues 111-120 (AIDEPEEDTE) the composition is skewed to acidic residues. A disordered region spans residues 111–130 (AIDEPEEDTESVMSPPELPP). Positions 126-131 (PELPPR) match the SH3-binding 1 motif. Phosphoserine is present on Ser245. The NPXY motif 1 signature appears at 914 to 917 (NPNY). Tyr917 carries the post-translational modification Phosphotyrosine. At Ser934 the chain carries Phosphoserine. A Phosphotyrosine modification is found at Tyr944. The tract at residues 946-1190 (QLPKDSSLGP…ESLLGRTAMQ (245 aa)) is disordered. A compositionally biased stretch (pro residues) spans 961–971 (PPTPPSQPPLS). Phosphothreonine is present on Thr963. 2 positions are modified to phosphoserine: Ser966 and Ser971. The SH3-binding 2 signature appears at 969-974 (PLSPKK). The segment covering 989-998 (QETRPGDLGK) has biased composition (basic and acidic residues). The tract at residues 1014–1028 (MFENPLYGSVSPFPK) is interaction with DAB2. Positions 1017-1020 (NPLY) match the NPXY motif 2 motif. The residue at position 1020 (Tyr1020) is a Phosphotyrosine. Over residues 1031-1045 (PRKEQESPKMMRKEP) the composition is skewed to basic and acidic residues. The short motif at 1038–1049 (PKMMRKEPPPCP) is the SH3-binding 3 element. Residues 1140 to 1149 (IPAPRPPLPV) show a composition bias toward pro residues. The segment covering 1161–1183 (KGRDYRDNTELPHHGKHRQEESL) has biased composition (basic and acidic residues).

This sequence belongs to the inositol 1,4,5-trisphosphate 5-phosphatase family. As to quaternary structure, interacts with tyrosine phosphorylated forms of SHC1. Interacts with tyrosine phosphorylated form of DOK1. Interacts with tyrosine phosphorylated form of DOK3. Interacts with tyrosine phosphorylated form of SLAMF1/CD150. Interacts with PTPN11/SHP-2 in response to IL-3. Interacts with receptor EPOR. Interacts with receptors MS4A2/FCER1B and FCER1G. Interacts with receptors FCGR2B and FCGR3. Interacts with receptor FCGR2A, leading to regulate gene expression during the phagocytic process. Interacts with GRB2. Interacts with PLCG1. Interacts with tyrosine kinases SRC and TEC. Interacts with c-Met/MET. Interacts with MILR1 (tyrosine-phosphorylated). Can weakly interact (via NPXY motif 2) with DAB2 (via PID domain); the interaction is impaired by tyrosine phosphorylation of the NPXY motif. Interacts (via SH2 domain) with tyrosine phosphorylated KLRC1 (via ITIM). Interacts with MPL/TPOR. Tyrosine phosphorylated by the members of the SRC family after exposure to a diverse array of extracellular stimuli such as cytokines, growth factors, antibodies, chemokines, integrin ligands and hypertonic and oxidative stress. Phosphorylated upon IgG receptor FCGR2B-binding.

The protein localises to the cytoplasm. It is found in the cell membrane. Its subcellular location is the membrane raft. It localises to the cytoskeleton. It catalyses the reaction a 1,2-diacyl-sn-glycero-3-phospho-(1D-myo-inositol-3,4,5-trisphosphate) + H2O = a 1,2-diacyl-sn-glycero-3-phospho-(1D-myo-inositol-3,4-bisphosphate) + phosphate. It carries out the reaction 1D-myo-inositol 1,3,4,5-tetrakisphosphate + H2O = 1D-myo-inositol 1,3,4-trisphosphate + phosphate. The catalysed reaction is a 1,2-diacyl-sn-glycero-3-phospho-(1D-myo-inositol-4,5-bisphosphate) + H2O = a 1,2-diacyl-sn-glycero-3-phospho-(1D-myo-inositol 4-phosphate) + phosphate. Activated upon translocation to the sites of synthesis of PtdIns(3,4,5)P3 in the membrane. Its function is as follows. Phosphatidylinositol (PtdIns) phosphatase that specifically hydrolyzes the 5-phosphate of phosphatidylinositol-3,4,5-trisphosphate (PtdIns(3,4,5)P3) to produce PtdIns(3,4)P2, thereby negatively regulating the PI3K (phosphoinositide 3-kinase) pathways. Also able to hydrolyze the 5-phosphate of phosphatidylinositol-4,5-bisphosphate (PtdIns(4,5)P3) and inositol 1,3,4,5-tetrakisphosphate. Acts as a negative regulator of B-cell antigen receptor signaling. Mediates signaling from the FC-gamma-RIIB receptor (FCGR2B), playing a central role in terminating signal transduction from activating immune/hematopoietic cell receptor systems. Acts as a negative regulator of myeloid cell proliferation/survival and chemotaxis, mast cell degranulation, immune cells homeostasis, integrin alpha-IIb/beta-3 signaling in platelets and JNK signaling in B-cells. Regulates proliferation of osteoclast precursors, macrophage programming, phagocytosis and activation and is required for endotoxin tolerance. Involved in the control of cell-cell junctions, CD32a signaling in neutrophils and modulation of EGF-induced phospholipase C activity. Key regulator of neutrophil migration, by governing the formation of the leading edge and polarization required for chemotaxis. Modulates FCGR3/CD16-mediated cytotoxicity in NK cells. Mediates the activin/TGF-beta-induced apoptosis through its Smad-dependent expression. This is Phosphatidylinositol 3,4,5-trisphosphate 5-phosphatase 1 (Inpp5d) from Rattus norvegicus (Rat).